The sequence spans 263 residues: Hydroxyethylthiazole kinase 2 (263 aa).

A substrate-binding site is contributed by M42. The ATP site is built by K118 and T164. A substrate-binding site is contributed by G191.

Belongs to the Thz kinase family. Mg(2+) serves as cofactor.

The catalysed reaction is 5-(2-hydroxyethyl)-4-methylthiazole + ATP = 4-methyl-5-(2-phosphooxyethyl)-thiazole + ADP + H(+). It participates in cofactor biosynthesis; thiamine diphosphate biosynthesis; 4-methyl-5-(2-phosphoethyl)-thiazole from 5-(2-hydroxyethyl)-4-methylthiazole: step 1/1. Its function is as follows. Catalyzes the phosphorylation of the hydroxyl group of 4-methyl-5-beta-hydroxyethylthiazole (THZ). This is Hydroxyethylthiazole kinase 2 from Clostridium botulinum (strain Loch Maree / Type A3).